A 2073-amino-acid polypeptide reads, in one-letter code: MHNGSESVLLFGDYTEPWIESIDSLCRQAVSEAWLQSFLDDTVTIIKEQKRSIERILQDSLGEFTDLKDLADRHRGRTDEISYVQGLMLFTVRAAYLLQWVKRDPSLLTASHAIGFSGGLANASVLAVAQDFDTLYTACLEGLRIFSRSCRLAIVRSRAIEEGSGSWGWLVVGISSNDLRHALDHFQNSLGIPNSKRSKVGLTGDRWNTVIGPPSTLELVFKQCPAIKSLPKEKLNIHALQHALDLSESDLDYIIGDSALAQSHVNPEFSLWGMAQPKEPWGSWGELLKVVIVKMLSEPLDIVGVVDEFSGRLGSVPQVNICNMAMEGPSSHAAYLLSTMKLSGKTVNFENGFGSEKAQSASSGRIAIVGMSGRGPGCEDLEEFWNVISNAQDQHQEIPKDRFNLEDYLKQGHVTHCQSESMAKHGCFITKPGEFDARFFHISPREALLMDPGHRMFLMSAYEALETAGYSNGHTKATDPQKISIFFAQCNDDWRIASHDVKGCDSYTLPGTARAFGPGRLAFHLGWEGPAYSMDSACASSVSSVHFACMSLKNKDTDMAVVGAANVIGYPHTFISLSQSGVLSRTGNCKPFRDDADGYCRADFSGAIVLKRLEDAIAANDNILGVLAGTGRNQAGNATSITTSDTATQTRLFHKVLRSANVSPEDISYVEMHGTGTPIGDPAEMGAIANVFGNRKGNTPLPLGAVKGNVGHSESSAGMASLLKCLMMLQKDAIPPQAGMPHALNPKFPSLSDINVVIPSKLGDFKKTLNMPRRILLNNFDAAGGNGCLLLEEYVPPTSKELNIDEQDPRSTHVVVLSAKTQASHHANKRNLLDWLKTNRSTRIQDIAYTSTARRVHWPLRYAIAASSTQELTTKLESSIARENSESTNGRKSPIVFTFTGQGSQYAGMGAELYSTCFAFRDTIKLCARICDDHQFPDFIDIITDKDIDISTKSPLQIQLALLALEIGLAAFWKSIGVLPDMVVGHSLGEYAALYVAGVLSLGDVFYVVGRRAMLLLDRCEIGSCSMLALNASVATVQAHLDTQPHLSCAVACINGPKATVVSGPLGEIADLQTLFHGNKIRSKLLPVPFAFHSLQMEPILDEFTILAGIATFMQPKIPVASTLLATVVDKEGIFGTQYLAEQTRQRVDFVGALNAVKSKMDDPIWLEVGPSPVCSGLVQATISPSTTKIMSTLDATGSDWSSIAHCLSGLYQNGVDIDWLGLHAPYEGGLTLQALPSYQWDLKDYWMPYVEPSGVDQTVIANTASGRGTMSSSISTCAQYVITETKTPKPQVNLGAPTADAGFKAFIDGHRLRGVPVCAGAVFIEAAETAARYLLKYLGRNDADTAVLSLQDMALIRPITQKSVQANAELQTTATLDSGSKDTVRITFGESLAAGSSQHLGGCLLSICEAGLESQWEKSSFFIRSRMNDIIANVKGGQGHRIQRDIYYALFADTVEYDNPFRGVKEAYVSQDFEEAAAEVILKADPTGTQFTTSPYWTDSLSQLCGFVVNGNPSRPKDITYMMASLGSYIQMGQIVPGKSYFTYSRISDRAQDLVYCDTFVFDNDRLVAQSTNCVFHRVQNVILERLLGKPASSSVPAQASDPLRSKRSPQEARSLPGEAKTEKPGSTIATTSPVLESGKSEQGMFQALIAAIVKTTGGELSELNDDTELADIGVDSIMAIEIVAHVKDATNQDLPLSFVLEYPTIGNLRCAFDEDVSSEFTDSEVTSGTPNSSESVTSEEELPGPEEHAFKEPKDDSPLARRDMDNSNDRSLDGGVLDDGSPQPRVRISLLQGRPVRGKPKFFLIADGSGSIATYIHLPPAKVKMPIYGVDSPFLHCPSRFTPEAGIPAAAKWIVEALMKAQPEGPFFLGGFSGGAMLSYEVARQLAAFDRKVDSMVLIDMCCPRPAVSSDLKESLWNDDIESFEEIASHVGSNVASNMQQHLRAIFKAVSVYHPPSMTAKERPDRTIIIWAKKGMITRCHDVPEIMERLSARGLTRTIPEGFMEDPSFGAIRWSFVSKGANDLGPNGWQKYIGHEPLCLSVDLDHLEMMEPGQVHIFRGAFEEAFRLIEA.

Positions 9-242 are N-terminal acylcarrier protein transacylase domain (SAT); the sequence is LLFGDYTEPW…EKLNIHALQH (234 aa). The Ketosynthase family 3 (KS3) domain occupies 363-793; the sequence is SGRIAIVGMS…GGNGCLLLEE (431 aa). Residues cysteine 538, histidine 673, and histidine 712 each act as for beta-ketoacyl synthase activity in the active site. The tract at residues 898 to 1198 is malonyl-CoA:ACP transacylase (MAT) domain; it reads TFTGQGSQYA…KIMSTLDATG (301 aa). The active-site For acyl/malonyl transferase activity is serine 987. The segment at 1276-1590 is product template (PT) domain; sequence STCAQYVITE…QNVILERLLG (315 aa). Positions 1279–1420 are N-terminal hotdog fold; it reads AQYVITETKT…AGLESQWEKS (142 aa). The region spanning 1279–1586 is the PKS/mFAS DH domain; it reads AQYVITETKT…FHRVQNVILE (308 aa). The active-site Proton acceptor; for dehydratase activity is the histidine 1311. Residues 1439-1586 form a C-terminal hotdog fold region; it reads QGHRIQRDIY…FHRVQNVILE (148 aa). Aspartate 1500 acts as the Proton donor; for dehydratase activity in catalysis. The interval 1594-1637 is disordered; sequence SSSVPAQASDPLRSKRSPQEARSLPGEAKTEKPGSTIATTSPVL. Positions 1641 to 1718 constitute a Carrier domain; sequence KSEQGMFQAL…NLRCAFDEDV (78 aa). Position 1678 is an O-(pantetheine 4'-phosphoryl)serine (serine 1678). A compositionally biased stretch (polar residues) spans 1721-1738; sequence EFTDSEVTSGTPNSSESV. Positions 1721 to 1786 are disordered; that stretch reads EFTDSEVTSG…GVLDDGSPQP (66 aa). Basic and acidic residues predominate over residues 1747-1774; that stretch reads PEEHAFKEPKDDSPLARRDMDNSNDRSL. Residues 1805–1950 are thioesterase (TE) domain; sequence FLIADGSGSI…MQQHLRAIFK (146 aa). The active-site For thioesterase activity is the histidine 2058.

It functions in the pathway secondary metabolite biosynthesis. In terms of biological role, highly reducing polyketide synthase; part of the gene cluster that mediates the biosynthesis of cladosporin, a tricyclic octaketide that acts as an antimalarial agent though inhibition of the Plasmodium falciparum lysyl-tRNA synthetase. The highly reducing polyketide synthase cla2 is responsible for biosynthesis up to the pentaketide stage, including of the tetrahydropyran (THP) ring, whereas the three subsequent ketide extensions with no reduction are catalyzed by the non-reducing polyketide synthase cla3. The chain is Non-reducing polyketide synthase cla3 from Cladosporium cladosporioides.